We begin with the raw amino-acid sequence, 449 residues long: Tubulin beta-8 chain (449 aa).

GTP-binding residues include Gln-11, Glu-69, Ser-138, Gly-142, Thr-143, Gly-144, Asn-204, and Asn-226. Glu-69 provides a ligand contact to Mg(2+). The disordered stretch occupies residues 428 to 449 (ATADEEEGYEYEEDEVEVQEEQ). A compositionally biased stretch (acidic residues) spans 429–449 (TADEEEGYEYEEDEVEVQEEQ).

This sequence belongs to the tubulin family. Dimer of alpha and beta chains. A typical microtubule is a hollow water-filled tube with an outer diameter of 25 nm and an inner diameter of 15 nM. Alpha-beta heterodimers associate head-to-tail to form protofilaments running lengthwise along the microtubule wall with the beta-tubulin subunit facing the microtubule plus end conferring a structural polarity. Microtubules usually have 13 protofilaments but different protofilament numbers can be found in some organisms and specialized cells. Mg(2+) is required as a cofactor.

It localises to the cytoplasm. Its subcellular location is the cytoskeleton. Functionally, tubulin is the major constituent of microtubules, a cylinder consisting of laterally associated linear protofilaments composed of alpha- and beta-tubulin heterodimers. Microtubules grow by the addition of GTP-tubulin dimers to the microtubule end, where a stabilizing cap forms. Below the cap, tubulin dimers are in GDP-bound state, owing to GTPase activity of alpha-tubulin. The chain is Tubulin beta-8 chain (TUBB8) from Arabidopsis thaliana (Mouse-ear cress).